Reading from the N-terminus, the 159-residue chain is 2-C-methyl-D-erythritol 2,4-cyclodiphosphate synthase (159 aa).

The a divalent metal cation site is built by aspartate 10 and histidine 12. 4-CDP-2-C-methyl-D-erythritol 2-phosphate contacts are provided by residues 10 to 12 (DVH) and 36 to 37 (HS). Residue histidine 44 coordinates a divalent metal cation. 4-CDP-2-C-methyl-D-erythritol 2-phosphate contacts are provided by residues 58–60 (DIG), 63–67 (FSDTD), and arginine 144.

Belongs to the IspF family. In terms of assembly, homotrimer. A divalent metal cation serves as cofactor.

It catalyses the reaction 4-CDP-2-C-methyl-D-erythritol 2-phosphate = 2-C-methyl-D-erythritol 2,4-cyclic diphosphate + CMP. The protein operates within isoprenoid biosynthesis; isopentenyl diphosphate biosynthesis via DXP pathway; isopentenyl diphosphate from 1-deoxy-D-xylulose 5-phosphate: step 4/6. Functionally, involved in the biosynthesis of isopentenyl diphosphate (IPP) and dimethylallyl diphosphate (DMAPP), two major building blocks of isoprenoid compounds. Catalyzes the conversion of 4-diphosphocytidyl-2-C-methyl-D-erythritol 2-phosphate (CDP-ME2P) to 2-C-methyl-D-erythritol 2,4-cyclodiphosphate (ME-CPP) with a corresponding release of cytidine 5-monophosphate (CMP). In Paraburkholderia phytofirmans (strain DSM 17436 / LMG 22146 / PsJN) (Burkholderia phytofirmans), this protein is 2-C-methyl-D-erythritol 2,4-cyclodiphosphate synthase.